A 584-amino-acid chain; its full sequence is MFRAQQNAFDDAVAKATDENLTSENWEYILDVCDKVAAEESGAKDAVAAMIKRLAHRNANVQLYTLELANALAQNCGPKIHRELASRSFTDALLRLANDRMFANNPDFGIMEQAYMKLKTQNPNLQPPSKPGKREITEADRQKEEEELQMALALSIREKPSAAPEPKAEPSTSVSEPASQTQTATSQAVPPGTSAATVSRVRALFDFQPSEPGELQFRKGDIIAVLESVYKDWWKGSLRGQTGIFPLNYVEKLPDPTVEELQREAQMEAEVFGQIKNVEKLLTLLSTRSSELNVQDNEEITSLYHSTLSIRPKLIELIGKYSQKKDEFTQLNEKFIKARRDYESLLEASMAHPAQPQYGRPGQAPYGYPGPAAPLGYPQGPPQSDPQRYFSPRPQDQTHMYPPTSHSPDPRGRTPPAGPSFPQHQQPPPDSYQPVHHRPESTYDNPQELGTSVYDSPVEHPSSSQRLPYPPSGAQVPPGVHQQFQHQQQEYPPSGYPPEDASKPPAAGFALQPPQQTLQQPPYPTAPGAHQPTPSHQPPPVPSTASKPTPYPSLTPGTPSGGEYQAYNPSQAGAANSNPNSYYR.

The 136-residue stretch at 16–151 (ATDENLTSEN…QKEEEELQMA (136 aa)) folds into the VHS domain. Disordered stretches follow at residues 121 to 145 (QNPN…QKEE) and 158 to 193 (EKPS…PPGT). Over residues 132–144 (GKREITEADRQKE) the composition is skewed to basic and acidic residues. Positions 143-162 (KEEEELQMALALSIREKPSA) constitute a UIM domain. Low complexity predominate over residues 161–171 (SAAPEPKAEPS). Residues 172 to 188 (TSVSEPASQTQTATSQA) are compositionally biased toward polar residues. The 60-residue stretch at 196-255 (ATVSRVRALFDFQPSEPGELQFRKGDIIAVLESVYKDWWKGSLRGQTGIFPLNYVEKLPD) folds into the SH3 domain. Residues 354-378 (AQPQYGRPGQAPYGYPGPAAPLGYP) show a composition bias toward low complexity. The tract at residues 354-584 (AQPQYGRPGQ…ANSNPNSYYR (231 aa)) is disordered. The span at 442 to 454 (TYDNPQELGTSVY) shows a compositional bias: polar residues. 2 stretches are compositionally biased toward low complexity: residues 475–489 (QVPP…HQQQ) and 510–534 (ALQP…QPTP). A compositionally biased stretch (polar residues) spans 567–584 (YNPSQAGAANSNPNSYYR).

This sequence belongs to the STAM family. In terms of assembly, component of the ESCRT-0 complex composed of HSE1 and VPS27.

The protein resides in the endosome membrane. Component of the ESCRT-0 complex which is the sorting receptor for ubiquitinated cargo proteins at the multivesicular body (MVB). In Aspergillus fumigatus (strain ATCC MYA-4609 / CBS 101355 / FGSC A1100 / Af293) (Neosartorya fumigata), this protein is Class E vacuolar protein-sorting machinery protein hse1 (hse1).